A 558-amino-acid chain; its full sequence is 5-aminolevulinate synthase, mitochondrial (558 aa).

The transit peptide at 1–25 (MERVVKLAAKHCPFVSKADPSALRR) directs the protein to the mitochondrion. The segment at 103-124 (TTTPVTKKHQMPKHYASDLNGV) is disordered. The substrate site is built by Arg-152, Ser-265, and Lys-284. The pyridoxal 5'-phosphate site is built by Ser-317, His-345, and Thr-374. Lys-377 is a catalytic residue. Lys-377 is subject to N6-(pyridoxal phosphate)lysine. Pyridoxal 5'-phosphate-binding residues include Thr-406 and Thr-407. Thr-492 is a substrate binding site.

Belongs to the class-II pyridoxal-phosphate-dependent aminotransferase family. In terms of assembly, homodimer. Pyridoxal 5'-phosphate serves as cofactor.

The protein localises to the mitochondrion matrix. The catalysed reaction is succinyl-CoA + glycine + H(+) = 5-aminolevulinate + CO2 + CoA. The protein operates within porphyrin-containing compound metabolism; protoporphyrin-IX biosynthesis; 5-aminolevulinate from glycine: step 1/1. Functionally, catalyzes the synthesis of 5-aminolevulinate (ALA) from succinyl-CoA and glycine, the first and rate-limiting step in heme biosynthesis. The chain is 5-aminolevulinate synthase, mitochondrial from Schizosaccharomyces pombe (strain 972 / ATCC 24843) (Fission yeast).